Here is a 497-residue protein sequence, read N- to C-terminus: Lysine--tRNA ligase (497 aa).

Mg(2+)-binding residues include glutamate 409 and glutamate 416.

This sequence belongs to the class-II aminoacyl-tRNA synthetase family. As to quaternary structure, homodimer. Mg(2+) is required as a cofactor.

Its subcellular location is the cytoplasm. The enzyme catalyses tRNA(Lys) + L-lysine + ATP = L-lysyl-tRNA(Lys) + AMP + diphosphate. In Streptococcus pyogenes serotype M49 (strain NZ131), this protein is Lysine--tRNA ligase.